The primary structure comprises 860 residues: MQEQYRPEEIEADVQLHWQEKQTFKVTEQPGKEKYYCLSMLPYPSGRLHMGHVRNYTIGDVISRYQRMLGKNVLQPIGWDAFGLPAEGAAVKNNTAPAPWTYANIDYMKNQLKLLGFGYDWDREVATCKPDYYRWEQWFFTKLYEKGLVYKKTSAVNWCPNDQTVLANEQVIDGCCWRCDTKVERKEIPQWFIKITAYADQLLNDLDTLESWPEQVKTMQRNWIGRSEGVEITFDVADSAEKLTVYTTRPDTFMGVTYVAVAAGHPLAAQAAAANPALADFIAECRNTKVAEADMATMEKKGMATGLYAIHPLNGEKVAIWVANFVLMEYGTGAVMAVPGHDQRDWEFATKYDLSIKPVILNADGSEPDLSAEAMTEKGNLFNSGEFDGLDFDAAFNAIADKLVEKGIGERKVNYRLRDWGVSRQRYWGAPIPMVTLEDGTVIPTPEDQLPVILPEDVVMDGITSPLKSNPEWAKTTVNGQPALRETDTFDTFMESSWYYARYTCPQYDQGMLDPAAANYWLPVDQYVGGIEHAIMHLMYFRFFHKLMRDAGLVTSDEPAKRLLCQGMVLADAFYYLGNNGERVWVSPIDVDVERDEKGRIVKAVDNEGRDVIYAGMSKMSKSKNNGIDPQVMVEKYGADTVRLFMMFASPAEMTLEWQESGVEGANRFLKRVWRQAFEHTEKGATTALDVATLTEDQKSLRRDLHKTIAKVTDDIGRRQTFNTAIAAIMELMNKLAKAPQDSDQDRALTQETLLAVVRMLYPFTPHVCFTLWQALQGEGDIDTAPWPVADESAMVEDSKLVVVQVNGKVRGKITVAADASEEQVRERAAQEPLVAKYLDGVTVRKVIYVPGKLLNLVVG.

The 'HIGH' region motif lies at 42 to 52; that stretch reads PYPSGRLHMGH. Residues 619-623 carry the 'KMSKS' region motif; sequence KMSKS. Lys-622 contributes to the ATP binding site.

Belongs to the class-I aminoacyl-tRNA synthetase family.

It localises to the cytoplasm. It carries out the reaction tRNA(Leu) + L-leucine + ATP = L-leucyl-tRNA(Leu) + AMP + diphosphate. The sequence is that of Leucine--tRNA ligase from Pectobacterium carotovorum subsp. carotovorum (strain PC1).